We begin with the raw amino-acid sequence, 202 residues long: Putative NAD(P)H nitroreductase YodC (202 aa).

Residues 11–13, 68–70, 155–156, and Arg192 each bind FMN; these read RAS, QKQ, and GG.

The protein belongs to the nitroreductase family. The cofactor is FMN.

The protein localises to the cytoplasm. Its function is as follows. Putative nitroreductase that may contribute to the degradation of aromatic compounds. This Bacillus subtilis (strain 168) protein is Putative NAD(P)H nitroreductase YodC (yodC).